A 199-amino-acid chain; its full sequence is Holliday junction branch migration complex subunit RuvA (199 aa).

Residues 1-63 (MIDYIKGNLV…EDSQRLFGFT (63 aa)) are domain I. The segment at 64–142 (TRTERLLFEK…DMAPMLEPAA (79 aa)) is domain II. Residues 143–153 (GADKQQKNPQL) are flexible linker. The domain III stretch occupies residues 153-199 (LEDALEALRALGYVEKELKKVEKQLKAETLETDEYIRRALALMLKRP).

Belongs to the RuvA family. As to quaternary structure, homotetramer. Forms an RuvA(8)-RuvB(12)-Holliday junction (HJ) complex. HJ DNA is sandwiched between 2 RuvA tetramers; dsDNA enters through RuvA and exits via RuvB. An RuvB hexamer assembles on each DNA strand where it exits the tetramer. Each RuvB hexamer is contacted by two RuvA subunits (via domain III) on 2 adjacent RuvB subunits; this complex drives branch migration. In the full resolvosome a probable DNA-RuvA(4)-RuvB(12)-RuvC(2) complex forms which resolves the HJ.

Its subcellular location is the cytoplasm. Functionally, the RuvA-RuvB-RuvC complex processes Holliday junction (HJ) DNA during genetic recombination and DNA repair, while the RuvA-RuvB complex plays an important role in the rescue of blocked DNA replication forks via replication fork reversal (RFR). RuvA specifically binds to HJ cruciform DNA, conferring on it an open structure. The RuvB hexamer acts as an ATP-dependent pump, pulling dsDNA into and through the RuvAB complex. HJ branch migration allows RuvC to scan DNA until it finds its consensus sequence, where it cleaves and resolves the cruciform DNA. The protein is Holliday junction branch migration complex subunit RuvA of Shouchella clausii (strain KSM-K16) (Alkalihalobacillus clausii).